Reading from the N-terminus, the 119-residue chain is Holo-[acyl-carrier-protein] synthase (119 aa).

Residues Asp-8 and Glu-58 each contribute to the Mg(2+) site.

This sequence belongs to the P-Pant transferase superfamily. AcpS family. It depends on Mg(2+) as a cofactor.

The protein resides in the cytoplasm. The catalysed reaction is apo-[ACP] + CoA = holo-[ACP] + adenosine 3',5'-bisphosphate + H(+). Transfers the 4'-phosphopantetheine moiety from coenzyme A to a Ser of acyl-carrier-protein. The chain is Holo-[acyl-carrier-protein] synthase from Bacillus cereus (strain ATCC 14579 / DSM 31 / CCUG 7414 / JCM 2152 / NBRC 15305 / NCIMB 9373 / NCTC 2599 / NRRL B-3711).